A 292-amino-acid polypeptide reads, in one-letter code: Glyoxylase B2 (292 aa).

Residues His72, His74, Asp76, His77, His148, and Asp166 each contribute to the Zn(2+) site. Substrate is bound by residues 175–181 (TARCDFP), 208–210 (HDY), and 284–287 (KIPL). His208 lines the Zn(2+) pocket.

Belongs to the metallo-beta-lactamase superfamily. Glyoxalase II family. Zn(2+) is required as a cofactor.

The polypeptide is Glyoxylase B2 (gloB2) (Dictyostelium discoideum (Social amoeba)).